The following is a 187-amino-acid chain: MNLQHHFLIAMPSLSDPYFKRSVVYICEHNANGAMGLVINKPIEQISVRKVLQKLKISPEDRDESVNLNKPVMTGGPLAEDHGFILHTPKPGFSSSIKISDDTMITTSKDVLETLGTPRQPKQILVTLGYTSWEKGQLEKEIMENSWLTTNADPHIIFNSPIADRWREAASLLGINIYNIAPQAGHA.

This sequence belongs to the UPF0301 (AlgH) family.

In Photorhabdus laumondii subsp. laumondii (strain DSM 15139 / CIP 105565 / TT01) (Photorhabdus luminescens subsp. laumondii), this protein is UPF0301 protein plu1183.